The sequence spans 321 residues: Phosphatidate cytidylyltransferase, mitochondrial (321 aa).

Belongs to the TAM41 family. Mg(2+) is required as a cofactor. Co(2+) serves as cofactor. It depends on Cu(2+) as a cofactor.

It is found in the mitochondrion inner membrane. It carries out the reaction a 1,2-diacyl-sn-glycero-3-phosphate + CTP + H(+) = a CDP-1,2-diacyl-sn-glycerol + diphosphate. It participates in phospholipid metabolism; CDP-diacylglycerol biosynthesis; CDP-diacylglycerol from sn-glycerol 3-phosphate: step 3/3. Its function is as follows. Catalyzes the formation of CDP-diacylglycerol (CDP-DAG) from phosphatidic acid (PA) in the mitochondrial inner membrane. Required for the biosynthesis of the dimeric phospholipid cardiolipin, which stabilizes supercomplexes of the mitochondrial respiratory chain in the mitochondrial inner membrane. This is Phosphatidate cytidylyltransferase, mitochondrial from Caenorhabditis elegans.